Consider the following 153-residue polypeptide: Aspartate carbamoyltransferase regulatory chain (153 aa).

Zn(2+)-binding residues include Cys-109, Cys-114, Cys-138, and Cys-141.

This sequence belongs to the PyrI family. As to quaternary structure, contains catalytic and regulatory chains. Zn(2+) is required as a cofactor.

Functionally, involved in allosteric regulation of aspartate carbamoyltransferase. This is Aspartate carbamoyltransferase regulatory chain from Nitrosopumilus maritimus (strain SCM1).